The primary structure comprises 507 residues: Interleukin-17 receptor E-like protein (507 aa).

A signal peptide spans 1 to 21 (MLAGQALAFLGLTWGTFQSLA).

It localises to the secreted. This Homo sapiens (Human) protein is Interleukin-17 receptor E-like protein.